A 188-amino-acid chain; its full sequence is dCTP deaminase (188 aa).

109 to 114 (KSTYAR) provides a ligand contact to dCTP. The Proton donor/acceptor role is filled by E135. Residues Q154, Y168, and Q178 each coordinate dCTP.

Belongs to the dCTP deaminase family. Homotrimer.

It catalyses the reaction dCTP + H2O + H(+) = dUTP + NH4(+). It functions in the pathway pyrimidine metabolism; dUMP biosynthesis; dUMP from dCTP (dUTP route): step 1/2. Its function is as follows. Catalyzes the deamination of dCTP to dUTP. The sequence is that of dCTP deaminase from Helicobacter pylori (strain J99 / ATCC 700824) (Campylobacter pylori J99).